The chain runs to 306 residues: uncharacterized protein (306 aa).

Residues 277-306 (TEIIQNYKIANELKKEKQQNKKKNSIELEE) are a coiled coil.

This is an uncharacterized protein from Saccharolobus islandicus (Sulfolobus islandicus).